Here is a 259-residue protein sequence, read N- to C-terminus: MNSHNITNESLALALMLVVVAILISHKEKLALEKDILWSVGRAIIQLIIVGYVLKYIFSVDDASLTLLMVLFICFNAAWNAQKRSKYIAKAFISSFIAITVGAGITLAVLILSGSIEFIPMQVIPIAGMIAGNAMVAVGLCYNNLGQRVISEQQQIQEKLSLGATPKQASAILIRDSIRAALIPTVDSAKTVGLVSLPGMMSGLIFAGIDPVKAIKYQIMVTFMLLSTASLSTIIACYLTYRKFYNSRHQLVVTQLKKK.

At 1–5 the chain is on the periplasmic side; sequence MNSHN. A helical membrane pass occupies residues 6-26; sequence ITNESLALALMLVVVAILISH. Over 27 to 35 the chain is Cytoplasmic; sequence KEKLALEKD. Transmembrane regions (helical) follow at residues 36–56 and 57–77; these read ILWS…VLKY and IFSV…CFNA. Over 78-91 the chain is Cytoplasmic; it reads AWNAQKRSKYIAKA. The chain crosses the membrane as a helical span at residues 92 to 112; that stretch reads FISSFIAITVGAGITLAVLIL. Over 113-117 the chain is Periplasmic; it reads SGSIE. A helical transmembrane segment spans residues 118 to 138; it reads FIPMQVIPIAGMIAGNAMVAV. Topologically, residues 139–191 are cytoplasmic; that stretch reads GLCYNNLGQRVISEQQQIQEKLSLGATPKQASAILIRDSIRAALIPTVDSAKT. Residues 192-212 traverse the membrane as a helical segment; that stretch reads VGLVSLPGMMSGLIFAGIDPV. Residues 213–218 lie on the Periplasmic side of the membrane; sequence KAIKYQ. Residues 219–239 traverse the membrane as a helical segment; the sequence is IMVTFMLLSTASLSTIIACYL. Residues 240–259 lie on the Cytoplasmic side of the membrane; the sequence is TYRKFYNSRHQLVVTQLKKK.

The protein belongs to the UPF0014 family. The complex is composed of two ATP-binding proteins (FetA) and two transmembrane proteins (FetB).

The protein localises to the cell inner membrane. In terms of biological role, part of the ABC transporter complex FetAB, which is probably involved in iron export and enhances resistance to H(2)O(2)-mediated oxidative stress. Probably responsible for the translocation of the substrate across the membrane. This is Probable iron export permease protein FetB (fetB) from Escherichia coli (strain K12).